We begin with the raw amino-acid sequence, 312 residues long: MVGPVRPQIVLFGSSIVQYSFTDRGWGATLADLYSRTADIILRGYAGWNSRFALKVLHQVFPKDAVIQPSLVIVYFGGNDSTHPHPSGHGPHVPLSEFIENMRKIGEHLLSLSDKTRVIFLTPPPMNEKQIEIVFGDAIKGRSNELCRPYAEELLNLCREINVKGIDIWTAIQQQDDWLNSCFTDGIHFTAKASEIVVKEILKVLRGADWKPSLYWKSLPVEFPFDFDAPNSISLHDLELTRNNHFESPHLVSLCEQELTRNEQLEPPHPVSLCDHELTRNEQLEPPHPVSLCDHELTQNEQLEPPQPTARL.

The first 22 residues, Met-1 to Thr-22, serve as a signal peptide directing secretion. N-linked (GlcNAc...) asparagine glycosylation is present at Asn-79. The segment at Glu-285–Leu-312 is disordered.

The protein belongs to the 'GDSL' lipolytic enzyme family.

Its subcellular location is the secreted. The sequence is that of GDSL esterase/lipase At2g38180 from Arabidopsis thaliana (Mouse-ear cress).